The sequence spans 404 residues: Probable tRNA sulfurtransferase (404 aa).

The region spanning 60-165 is the THUMP domain; sequence QPIVEALKLV…DEAAYISYEE (106 aa). ATP-binding positions include 183-184, 208-209, arginine 265, glycine 287, and glutamine 296; these read ML and HF.

The protein belongs to the ThiI family.

The protein resides in the cytoplasm. It carries out the reaction [ThiI sulfur-carrier protein]-S-sulfanyl-L-cysteine + a uridine in tRNA + 2 reduced [2Fe-2S]-[ferredoxin] + ATP + H(+) = [ThiI sulfur-carrier protein]-L-cysteine + a 4-thiouridine in tRNA + 2 oxidized [2Fe-2S]-[ferredoxin] + AMP + diphosphate. The catalysed reaction is [ThiS sulfur-carrier protein]-C-terminal Gly-Gly-AMP + S-sulfanyl-L-cysteinyl-[cysteine desulfurase] + AH2 = [ThiS sulfur-carrier protein]-C-terminal-Gly-aminoethanethioate + L-cysteinyl-[cysteine desulfurase] + A + AMP + 2 H(+). It participates in cofactor biosynthesis; thiamine diphosphate biosynthesis. Catalyzes the ATP-dependent transfer of a sulfur to tRNA to produce 4-thiouridine in position 8 of tRNAs, which functions as a near-UV photosensor. Also catalyzes the transfer of sulfur to the sulfur carrier protein ThiS, forming ThiS-thiocarboxylate. This is a step in the synthesis of thiazole, in the thiamine biosynthesis pathway. The sulfur is donated as persulfide by IscS. This is Probable tRNA sulfurtransferase from Streptococcus pyogenes serotype M1.